The chain runs to 107 residues: Metallothionein-1 (107 aa).

Positions 1-2 (MD) are excised as a propeptide.

The protein belongs to the metallothionein superfamily. Type 7 family.

Its function is as follows. The metallothioneins are involved in the cellular sequestration of toxic metal ions. Binds 12 cadmium ions per molecule. In Tetrahymena pigmentosa, this protein is Metallothionein-1.